The chain runs to 880 residues: Valine--tRNA ligase (880 aa).

The 'HIGH' region signature appears at Pro47 to His57. Residues Lys526–Ser530 carry the 'KMSKS' region motif. Lys529 is an ATP binding site. The stretch at Leu810–Arg845 forms a coiled coil.

Belongs to the class-I aminoacyl-tRNA synthetase family. ValS type 1 subfamily. In terms of assembly, monomer.

Its subcellular location is the cytoplasm. The catalysed reaction is tRNA(Val) + L-valine + ATP = L-valyl-tRNA(Val) + AMP + diphosphate. Functionally, catalyzes the attachment of valine to tRNA(Val). As ValRS can inadvertently accommodate and process structurally similar amino acids such as threonine, to avoid such errors, it has a 'posttransfer' editing activity that hydrolyzes mischarged Thr-tRNA(Val) in a tRNA-dependent manner. The polypeptide is Valine--tRNA ligase (Clostridium perfringens (strain 13 / Type A)).